Consider the following 170-residue polypeptide: Adenine phosphoribosyltransferase (170 aa).

It belongs to the purine/pyrimidine phosphoribosyltransferase family. In terms of assembly, homodimer.

It is found in the cytoplasm. The enzyme catalyses AMP + diphosphate = 5-phospho-alpha-D-ribose 1-diphosphate + adenine. Its pathway is purine metabolism; AMP biosynthesis via salvage pathway; AMP from adenine: step 1/1. Its function is as follows. Catalyzes a salvage reaction resulting in the formation of AMP, that is energically less costly than de novo synthesis. In Trichodesmium erythraeum (strain IMS101), this protein is Adenine phosphoribosyltransferase.